The following is a 201-amino-acid chain: Urease accessory protein UreG (201 aa).

Residue 11–18 coordinates GTP; it reads GPVGSGKT.

This sequence belongs to the SIMIBI class G3E GTPase family. UreG subfamily. As to quaternary structure, homodimer. UreD, UreF and UreG form a complex that acts as a GTP-hydrolysis-dependent molecular chaperone, activating the urease apoprotein by helping to assemble the nickel containing metallocenter of UreC. The UreE protein probably delivers the nickel.

The protein localises to the cytoplasm. Functionally, facilitates the functional incorporation of the urease nickel metallocenter. This process requires GTP hydrolysis, probably effectuated by UreG. This Synechococcus sp. (strain CC9605) protein is Urease accessory protein UreG.